We begin with the raw amino-acid sequence, 262 residues long: Ribose-5-phosphate isomerase A (262 aa).

Substrate-binding positions include Thr33–Thr36, Asp89–Asp92, and Lys102–Gly105. Glu111 (proton acceptor) is an active-site residue. Lys129 is a substrate binding site.

The protein belongs to the ribose 5-phosphate isomerase family. Homodimer.

It carries out the reaction aldehydo-D-ribose 5-phosphate = D-ribulose 5-phosphate. It participates in carbohydrate degradation; pentose phosphate pathway; D-ribose 5-phosphate from D-ribulose 5-phosphate (non-oxidative stage): step 1/1. In terms of biological role, catalyzes the reversible conversion of ribose-5-phosphate to ribulose 5-phosphate. This chain is Ribose-5-phosphate isomerase A, found in Jannaschia sp. (strain CCS1).